The primary structure comprises 129 residues: Small ribosomal subunit protein uS11 (129 aa).

The protein belongs to the universal ribosomal protein uS11 family. As to quaternary structure, part of the 30S ribosomal subunit. Interacts with proteins S7 and S18. Binds to IF-3.

In terms of biological role, located on the platform of the 30S subunit, it bridges several disparate RNA helices of the 16S rRNA. Forms part of the Shine-Dalgarno cleft in the 70S ribosome. The protein is Small ribosomal subunit protein uS11 of Nitrosospira multiformis (strain ATCC 25196 / NCIMB 11849 / C 71).